Reading from the N-terminus, the 123-residue chain is Protein HesB, vegetative (123 aa).

Belongs to the HesB/IscA family.

May be required for efficient nitrogen fixation. This is Protein HesB, vegetative (hesB2) from Trichormus variabilis (strain ATCC 29413 / PCC 7937) (Anabaena variabilis).